The following is a 195-amino-acid chain: Putative NADH dehydrogenase/NAD(P)H nitroreductase RSc1004 (195 aa).

It belongs to the nitroreductase family. HadB/RutE subfamily. The cofactor is FMN.

The protein is Putative NADH dehydrogenase/NAD(P)H nitroreductase RSc1004 of Ralstonia nicotianae (strain ATCC BAA-1114 / GMI1000) (Ralstonia solanacearum).